Here is a 260-residue protein sequence, read N- to C-terminus: tRNA (guanine-N(7)-)-methyltransferase (260 aa).

A disordered region spans residues 1–37 (MIHDPNDAGLPDQLPTPSSEAENSPAGDTTPPEEALH). Residues glutamate 90, glutamate 115, aspartate 142, and aspartate 165 each coordinate S-adenosyl-L-methionine. Aspartate 165 is an active-site residue. Substrate contacts are provided by residues lysine 169, aspartate 201, and 236–239 (TKFE).

It belongs to the class I-like SAM-binding methyltransferase superfamily. TrmB family.

It catalyses the reaction guanosine(46) in tRNA + S-adenosyl-L-methionine = N(7)-methylguanosine(46) in tRNA + S-adenosyl-L-homocysteine. It functions in the pathway tRNA modification; N(7)-methylguanine-tRNA biosynthesis. Catalyzes the formation of N(7)-methylguanine at position 46 (m7G46) in tRNA. This Paraburkholderia xenovorans (strain LB400) protein is tRNA (guanine-N(7)-)-methyltransferase.